A 715-amino-acid chain; its full sequence is Glycine--tRNA ligase beta subunit (715 aa).

It belongs to the class-II aminoacyl-tRNA synthetase family. In terms of assembly, tetramer of two alpha and two beta subunits.

It localises to the cytoplasm. It catalyses the reaction tRNA(Gly) + glycine + ATP = glycyl-tRNA(Gly) + AMP + diphosphate. This Nitrosomonas europaea (strain ATCC 19718 / CIP 103999 / KCTC 2705 / NBRC 14298) protein is Glycine--tRNA ligase beta subunit.